Consider the following 347-residue polypeptide: Phenylalanine--tRNA ligase alpha subunit (347 aa).

E259 contacts Mg(2+).

Belongs to the class-II aminoacyl-tRNA synthetase family. Phe-tRNA synthetase alpha subunit type 1 subfamily. In terms of assembly, tetramer of two alpha and two beta subunits. The cofactor is Mg(2+).

Its subcellular location is the cytoplasm. The catalysed reaction is tRNA(Phe) + L-phenylalanine + ATP = L-phenylalanyl-tRNA(Phe) + AMP + diphosphate + H(+). The sequence is that of Phenylalanine--tRNA ligase alpha subunit from Oenococcus oeni (strain ATCC BAA-331 / PSU-1).